The primary structure comprises 119 residues: Phytosulfokines 2 (119 aa).

The N-terminal stretch at Met-1–Ala-34 is a signal peptide. A propeptide spanning residues Ala-35–Asp-109 is cleaved from the precursor. 2 positions are modified to sulfotyrosine: Tyr-110 and Tyr-112. Positions His-115 to Pro-119 are excised as a propeptide.

It belongs to the phytosulfokine family. Post-translationally, sulfation is important for activity and for the binding to a putative membrane receptor. In terms of processing, PSK-alpha is produced by endopeptidase digestion. PSK-beta is produced from PSK-alpha by exopeptidase digestion.

The protein resides in the secreted. Promotes plant cell differentiation, organogenesis and somatic embryogenesis as well as cell proliferation. The protein is Phytosulfokines 2 (PSK2) of Oryza sativa subsp. indica (Rice).